Reading from the N-terminus, the 312-residue chain is Glycine--tRNA ligase alpha subunit (312 aa).

This sequence belongs to the class-II aminoacyl-tRNA synthetase family. In terms of assembly, tetramer of two alpha and two beta subunits.

The protein resides in the cytoplasm. It catalyses the reaction tRNA(Gly) + glycine + ATP = glycyl-tRNA(Gly) + AMP + diphosphate. This Delftia acidovorans (strain DSM 14801 / SPH-1) protein is Glycine--tRNA ligase alpha subunit.